The primary structure comprises 694 residues: MSGGRFDFDDGGAYCGGWEGGKAHGHGLCTGPKGQGEYSGSWNFGFEVAGVYTWPSGNTFEGYWSQGKRHGLGIETKGRWLYKGEWTHGFKGRYGTRQSTSSGAKYEGTWNNGLQDGYGTETYADGGTYQGQFTNGMRHGYGVRQSVPYGMAVVVRSPLRTSLSSLRSEHSNGTVAPDSPASPAADGPALPSPAIPRGGFALSLLANAEAARAPKGGGLFPRGALLGKLRRAESRTSVGSQRSRVSFLKSDLSSGASDAASTASLGEGAEGADDAAPFEADIDATTTETYMGEWKNDKRSGFGVSERSSGLRYEGEWLDNLRHGYGCTTLPDGHREEGKYRHNVLVKGTKRRVLPLKSNKVRQKVEHSVEGAQRAAAIARQKAEIAVSRTSHARAKAEAAEQAALAANQESNIARSLARELAPDFYQPGPEYQKRRLLQEILEHSESLLEPPDRGAAGLPQPPRESPQLHERETPRPEGGPPSPAGTPPQPKRPRPGASKDGLLGPGAWNGEPSGGSGGEGSRPATPAAAGAGRRSPARPASEHMAIEALQAPPAPSREPEVALYRGYHSYAVRTAPPAPPPFEDDPQPEAADPDSAPASPATAPGQAPALGNPEPAPESPAKLEPKPIVPKAKARKTEARGLSKTGAKKKPRKEAAQAAEAEVEVEEVPNTVLICMVILLNIGLAILFVHLLT.

The Cytoplasmic portion of the chain corresponds to 1 to 672 (MSGGRFDFDD…EVEVEEVPNT (672 aa)). MORN repeat units lie at residues 14–36 (YCGGWEGGKAHGHGLCTGPKGQG), 38–59 (YSGSWNFGFEVAGVYTWPSGNT), 60–79 (FEGYWSQGKRHGLGIETKGR), 82–104 (YKGEWTHGFKGRYGTRQSTSSGA), 106–128 (YEGTWNNGLQDGYGTETYADGGT), and 129–151 (YQGQFTNGMRHGYGVRQSVPYGM). Phosphoserine occurs at positions 162 and 165. Disordered regions lie at residues 164 to 192 (SSLRSEHSNGTVAPDSPASPAADGPALPS) and 231 to 278 (RAES…AAPF). A compositionally biased stretch (low complexity) spans 176–189 (APDSPASPAADGPA). Over residues 235–244 (RTSVGSQRSR) the composition is skewed to polar residues. Positions 250 to 267 (SDLSSGASDAASTASLGE) are enriched in low complexity. MORN repeat units follow at residues 290-312 (YMGEWKNDKRSGFGVSERSSGLR) and 313-335 (YEGEWLDNLRHGYGCTTLPDGHR). Residues 350-364 (KRRVLPLKSNKVRQK) carry the Bipartite nuclear localization signal motif. Phosphoserine occurs at positions 445, 447, and 466. The tract at residues 448-663 (LLEPPDRGAA…KEAAQAAEAE (216 aa)) is disordered. Positions 467-476 (PQLHERETPR) are enriched in basic and acidic residues. Thr474 is subject to Phosphothreonine. Residues 478–491 (EGGPPSPAGTPPQP) are compositionally biased toward pro residues. Position 483 is a phosphoserine (Ser483). Thr487 carries the post-translational modification Phosphothreonine. The short motif at 492 to 496 (KRPRP) is the Nuclear localization signal element. The segment covering 522-540 (SRPATPAAAGAGRRSPARP) has biased composition (low complexity). Ser536, Ser542, Ser596, and Ser600 each carry phosphoserine. The span at 589–610 (PEAADPDSAPASPATAPGQAPA) shows a compositional bias: low complexity. A helical; Anchor for type IV membrane protein transmembrane segment spans residues 673–693 (VLICMVILLNIGLAILFVHLL).

It belongs to the junctophilin family. Interacts with TRPC3. Interacts with BAG5 and HSPA8; the interaction with HSPA8 is increased in the presence of BAG5. Junctophilin-2 N-terminal fragment: Interacts with MEF2C. Post-translationally, proteolytically cleaved by calpain in response to cardiac stress. The major cleavage site takes place at the C-terminus and leads to the release of the Junctophilin-2 N-terminal fragment chain (JP2NT). Phosphorylation on Ser-165, probably by PKC, affects RYR1-mediated calcium ion release, interaction with TRPC3, and skeletal muscle myotubule development.

The protein resides in the cell membrane. Its subcellular location is the sarcoplasmic reticulum membrane. It localises to the endoplasmic reticulum membrane. The protein localises to the nucleus. Membrane-binding protein that provides a structural bridge between the plasma membrane and the sarcoplasmic reticulum and is required for normal excitation-contraction coupling in cardiomyocytes. Provides a structural foundation for functional cross-talk between the cell surface and intracellular Ca(2+) release channels by maintaining the 12-15 nm gap between the sarcolemma and the sarcoplasmic reticulum membranes in the cardiac dyads. Necessary for proper intracellular Ca(2+) signaling in cardiac myocytes via its involvement in ryanodine receptor-mediated calcium ion release. Contributes to the construction of skeletal muscle triad junctions. Its function is as follows. Transcription repressor required to safeguard against the deleterious effects of cardiac stress. Generated following cleavage of the Junctophilin-2 chain by calpain in response to cardiac stress in cardiomyocytes. Following cleavage and release from the membrane, translocates to the nucleus, binds DNA and represses expression of genes implicated in cell growth and differentiation, hypertrophy, inflammation and fibrosis. Modifies the transcription profile and thereby attenuates pathological remodeling in response to cardiac stress. Probably acts by competing with MEF2 transcription factors and TATA-binding proteins. The chain is Junctophilin-2 (JPH2) from Oryctolagus cuniculus (Rabbit).